The primary structure comprises 294 residues: Shikimate dehydrogenase (NADP(+)) (294 aa).

Shikimate contacts are provided by residues 23 to 25 (SRS) and Thr-76. The Proton acceptor role is filled by Lys-80. Shikimate contacts are provided by Asn-101 and Asp-116. Residues 141–145 (GAGGA) and Met-233 contribute to the NADP(+) site. A shikimate-binding site is contributed by Tyr-235. Gly-256 contacts NADP(+).

It belongs to the shikimate dehydrogenase family. As to quaternary structure, homodimer.

The enzyme catalyses shikimate + NADP(+) = 3-dehydroshikimate + NADPH + H(+). The protein operates within metabolic intermediate biosynthesis; chorismate biosynthesis; chorismate from D-erythrose 4-phosphate and phosphoenolpyruvate: step 4/7. Involved in the biosynthesis of the chorismate, which leads to the biosynthesis of aromatic amino acids. Catalyzes the reversible NADPH linked reduction of 3-dehydroshikimate (DHSA) to yield shikimate (SA). This chain is Shikimate dehydrogenase (NADP(+)), found in Methylibium petroleiphilum (strain ATCC BAA-1232 / LMG 22953 / PM1).